Reading from the N-terminus, the 690-residue chain is Elongation factor G (690 aa).

Residues 8-283 (EDYRNFGIMA…AVVDYLPSPV (276 aa)) form the tr-type G domain. Residues 17–24 (AHIDAGKT), 81–85 (DTPGH), and 135–138 (NKMD) contribute to the GTP site.

This sequence belongs to the TRAFAC class translation factor GTPase superfamily. Classic translation factor GTPase family. EF-G/EF-2 subfamily.

The protein resides in the cytoplasm. Functionally, catalyzes the GTP-dependent ribosomal translocation step during translation elongation. During this step, the ribosome changes from the pre-translocational (PRE) to the post-translocational (POST) state as the newly formed A-site-bound peptidyl-tRNA and P-site-bound deacylated tRNA move to the P and E sites, respectively. Catalyzes the coordinated movement of the two tRNA molecules, the mRNA and conformational changes in the ribosome. The protein is Elongation factor G of Rhodopseudomonas palustris (strain BisB18).